The following is a 577-amino-acid chain: Arginine--tRNA ligase (577 aa).

The 'HIGH' region signature appears at 122–132 (PNVAKEMHVGH).

This sequence belongs to the class-I aminoacyl-tRNA synthetase family. As to quaternary structure, monomer.

Its subcellular location is the cytoplasm. It catalyses the reaction tRNA(Arg) + L-arginine + ATP = L-arginyl-tRNA(Arg) + AMP + diphosphate. The chain is Arginine--tRNA ligase from Salmonella gallinarum (strain 287/91 / NCTC 13346).